Here is a 1379-residue protein sequence, read N- to C-terminus: DNA-directed RNA polymerase subunit beta'' (1379 aa).

Residues Cys-220, Cys-293, Cys-300, and Cys-303 each coordinate Zn(2+).

Belongs to the RNA polymerase beta' chain family. RpoC2 subfamily. In plastids the minimal PEP RNA polymerase catalytic core is composed of four subunits: alpha, beta, beta', and beta''. When a (nuclear-encoded) sigma factor is associated with the core the holoenzyme is formed, which can initiate transcription. Requires Zn(2+) as cofactor.

The protein localises to the plastid. It is found in the chloroplast. The catalysed reaction is RNA(n) + a ribonucleoside 5'-triphosphate = RNA(n+1) + diphosphate. In terms of biological role, DNA-dependent RNA polymerase catalyzes the transcription of DNA into RNA using the four ribonucleoside triphosphates as substrates. The protein is DNA-directed RNA polymerase subunit beta'' of Barbarea verna (Land cress).